A 580-amino-acid polypeptide reads, in one-letter code: Nuclear body protein SP140-like protein (580 aa).

The HSR domain occupies 33–149; the sequence is SLQRLFTEDQ…IYKSFKNAIQ (117 aa). The tract at residues 155-293 is disordered; the sequence is QESDRKEREE…RSRASRKHKD (139 aa). Over residues 156-170 the composition is skewed to basic and acidic residues; sequence ESDRKEREERPDIKL. A Glycyl lysine isopeptide (Lys-Gly) (interchain with G-Cter in SUMO2) cross-link involves residue Lys-169. Phosphoserine is present on Ser-180. Positions 207–219 are enriched in basic residues; sequence KPKRKRRKKKGHG. Over residues 224–236 the composition is skewed to polar residues; the sequence is GTRTQKNNQQNDN. Positions 280–290 are enriched in basic residues; the sequence is QKRVRSRASRK. Residue Lys-292 forms a Glycyl lysine isopeptide (Lys-Gly) (interchain with G-Cter in SUMO2) linkage. In terms of domain architecture, SAND spans 293–374; sequence DETVDFQAPL…RRLMEEGSLP (82 aa). The PHD-type zinc finger occupies 403–449; sequence LDECEVCRDGGELFCCDTCSRVFHEDCHIPPVESEKTPWNCIFCRMK. The Bromo domain occupies 467–570; sequence QMCPEEQLKC…AEFEKDFKEV (104 aa).

The chain is Nuclear body protein SP140-like protein (SP140L) from Homo sapiens (Human).